Reading from the N-terminus, the 671-residue chain is DNA ligase (671 aa).

Residues 34–38 (DAEYD), 83–84 (SL), and E117 contribute to the NAD(+) site. Residue K119 is the N6-AMP-lysine intermediate of the active site. 4 residues coordinate NAD(+): R140, E177, K293, and K317. 4 residues coordinate Zn(2+): C411, C414, C429, and C434. The 81-residue stretch at 591 to 671 (KVGGKFTGKT…EFLQMLEGEQ (81 aa)) folds into the BRCT domain.

Belongs to the NAD-dependent DNA ligase family. LigA subfamily. Requires Mg(2+) as cofactor. The cofactor is Mn(2+).

It catalyses the reaction NAD(+) + (deoxyribonucleotide)n-3'-hydroxyl + 5'-phospho-(deoxyribonucleotide)m = (deoxyribonucleotide)n+m + AMP + beta-nicotinamide D-nucleotide.. Functionally, DNA ligase that catalyzes the formation of phosphodiester linkages between 5'-phosphoryl and 3'-hydroxyl groups in double-stranded DNA using NAD as a coenzyme and as the energy source for the reaction. It is essential for DNA replication and repair of damaged DNA. This chain is DNA ligase, found in Geobacter metallireducens (strain ATCC 53774 / DSM 7210 / GS-15).